The following is a 381-amino-acid chain: Carboxylesterase 5A (381 aa).

The active-site Acyl-ester intermediate is the Ser-108. A disulfide bond links Cys-162 and Cys-173. Asn-163 is a glycosylation site (N-linked (GlcNAc...) asparagine). Glu-227 acts as the Charge relay system in catalysis. N-linked (GlcNAc...) asparagine glycosylation occurs at Asn-245. Catalysis depends on His-336, which acts as the Charge relay system.

Belongs to the type-B carboxylesterase/lipase family. In terms of assembly, component of a epididymal complex at least composed of soluble form of prion protein PRNP, CLU, BPI, CES5A, MANBA and GLB1. Post-translationally, N-glycosylated. Detected in corpus and cauda epididymal fluid. Present in seminal fluid but not found to be associated with sperm (at protein level). Not expressed in other tissues.

It localises to the secreted. The catalysed reaction is a carboxylic ester + H2O = an alcohol + a carboxylate + H(+). Functionally, involved in the detoxification of xenobiotics and in the activation of ester and amide prodrugs. The chain is Carboxylesterase 5A (CES5A) from Ovis aries (Sheep).